A 462-amino-acid chain; its full sequence is L-seryl-tRNA(Sec) selenium transferase (462 aa).

Lys-292 is subject to N6-(pyridoxal phosphate)lysine.

It belongs to the SelA family. It depends on pyridoxal 5'-phosphate as a cofactor.

The protein resides in the cytoplasm. The enzyme catalyses L-seryl-tRNA(Sec) + selenophosphate + H(+) = L-selenocysteinyl-tRNA(Sec) + phosphate. The protein operates within aminoacyl-tRNA biosynthesis; selenocysteinyl-tRNA(Sec) biosynthesis; selenocysteinyl-tRNA(Sec) from L-seryl-tRNA(Sec) (bacterial route): step 1/1. Converts seryl-tRNA(Sec) to selenocysteinyl-tRNA(Sec) required for selenoprotein biosynthesis. The polypeptide is L-seryl-tRNA(Sec) selenium transferase (Geotalea uraniireducens (strain Rf4) (Geobacter uraniireducens)).